The chain runs to 343 residues: Heat-inducible transcription repressor HrcA (343 aa).

The protein belongs to the HrcA family.

In terms of biological role, negative regulator of class I heat shock genes (grpE-dnaK-dnaJ and groELS operons). Prevents heat-shock induction of these operons. The protein is Heat-inducible transcription repressor HrcA of Mycobacterium avium (strain 104).